Here is a 301-residue protein sequence, read N- to C-terminus: GTPase IMAP family member 3 (301 aa).

The Cytoplasmic portion of the chain corresponds to 1–279 (METLQNVVTG…GKKLEVLHSD (279 aa)). One can recognise an AIG1-type G domain in the interval 20-223 (SRPLRILLVG…HSNDLFLHAE (204 aa)). GTP is bound by residues 29-37 (GKSGCGKSA), Ser-50, 147-149 (RKE), and Asn-184. Residues 263–301 (VLKVLPIGKKLEVLHSDFCWYLVLAILIFFVFFFLLFYV) are required for targeting to the endoplasmic reticulum. A helical; Anchor for type IV membrane protein transmembrane segment spans residues 280-300 (FCWYLVLAILIFFVFFFLLFY). A topological domain (lumenal) is located at residue Val-301.

The protein belongs to the TRAFAC class TrmE-Era-EngA-EngB-Septin-like GTPase superfamily. AIG1/Toc34/Toc159-like paraseptin GTPase family. IAN subfamily. As to quaternary structure, interacts with BAD, BAK1, BAX, BCL2, BCL2L1/Bcl-xL and BCL2L11/BimEL. The interaction with BAX is increased, when cells initiate apoptosis upon IL2 withdrawal. In terms of tissue distribution, expressed in thymus (in thymocytes), spleen (in splenocytes), lymph node and, at lower levels, in lung. Highly expressed in T lymphocytes.

It is found in the endoplasmic reticulum membrane. In terms of biological role, during thymocyte development, may support the positive selection of CD4 and CD8 T cells. May play a role in mitochondrial DNA segregation in hematopoietic tissues. Binds GTP. The chain is GTPase IMAP family member 3 (Gimap3) from Mus musculus (Mouse).